The following is a 368-amino-acid chain: Putative phospho-2-dehydro-3-deoxyheptonate aldolase (368 aa).

The protein belongs to the class-I DAHP synthase family.

It catalyses the reaction D-erythrose 4-phosphate + phosphoenolpyruvate + H2O = 7-phospho-2-dehydro-3-deoxy-D-arabino-heptonate + phosphate. The protein operates within metabolic intermediate biosynthesis; chorismate biosynthesis; chorismate from D-erythrose 4-phosphate and phosphoenolpyruvate: step 1/7. Functionally, stereospecific condensation of phosphoenolpyruvate (PEP) and D-erythrose-4-phosphate (E4P) giving rise to 3-deoxy-D-arabino-heptulosonate-7-phosphate (DAHP). This is Putative phospho-2-dehydro-3-deoxyheptonate aldolase from Schizosaccharomyces pombe (strain 972 / ATCC 24843) (Fission yeast).